The sequence spans 273 residues: uncharacterized protein (273 aa).

Val-10–Ile-34 provides a ligand contact to NAD(+). Residue Ser-142 coordinates substrate. Tyr-155 serves as the catalytic Proton acceptor.

Belongs to the short-chain dehydrogenases/reductases (SDR) family.

This is an uncharacterized protein from Bacillus subtilis (strain 168).